A 498-amino-acid chain; its full sequence is Glutamyl-tRNA(Gln) amidotransferase subunit A (498 aa).

Catalysis depends on charge relay system residues K79 and S154. S178 acts as the Acyl-ester intermediate in catalysis.

It belongs to the amidase family. GatA subfamily. As to quaternary structure, heterotrimer of A, B and C subunits.

The enzyme catalyses L-glutamyl-tRNA(Gln) + L-glutamine + ATP + H2O = L-glutaminyl-tRNA(Gln) + L-glutamate + ADP + phosphate + H(+). In terms of biological role, allows the formation of correctly charged Gln-tRNA(Gln) through the transamidation of misacylated Glu-tRNA(Gln) in organisms which lack glutaminyl-tRNA synthetase. The reaction takes place in the presence of glutamine and ATP through an activated gamma-phospho-Glu-tRNA(Gln). This is Glutamyl-tRNA(Gln) amidotransferase subunit A from Psychrobacter cryohalolentis (strain ATCC BAA-1226 / DSM 17306 / VKM B-2378 / K5).